The chain runs to 399 residues: Glutathione-independent formaldehyde dehydrogenase (399 aa).

Cys-47 lines the Zn(2+) pocket. Residues Gly-48, Ser-49, and His-52 each contribute to the NAD(+) site. 6 residues coordinate Zn(2+): His-68, Cys-98, Cys-101, Cys-104, Cys-112, and Asp-170. The NAD(+) site is built by Val-198, Asp-218, Arg-223, Val-263, Arg-268, Pro-300, Gln-338, and Thr-339.

The protein belongs to the zinc-containing alcohol dehydrogenase family. In terms of assembly, homotetramer. The cofactor is Zn(2+).

It catalyses the reaction formaldehyde + NAD(+) + H2O = formate + NADH + 2 H(+). The catalysed reaction is acetaldehyde + NAD(+) + H2O = acetate + NADH + 2 H(+). Functionally, dehydrogenase that catalyzes the NAD(+)-dependent oxidation of formaldehyde and acetaldehyde. Shows no detectable activity against either aldehydes with longer carbon chains or ethanol. The sequence is that of Glutathione-independent formaldehyde dehydrogenase from Pseudomonas aeruginosa (strain LESB58).